The following is a 137-amino-acid chain: Large ribosomal subunit protein uL16 (137 aa).

The segment covering 1-17 (MLQPKRTKFRKTHKGRN) has biased composition (basic residues). A disordered region spans residues 1-24 (MLQPKRTKFRKTHKGRNRGLANSG).

It belongs to the universal ribosomal protein uL16 family. In terms of assembly, part of the 50S ribosomal subunit.

In terms of biological role, binds 23S rRNA and is also seen to make contacts with the A and possibly P site tRNAs. The polypeptide is Large ribosomal subunit protein uL16 (Aeromonas hydrophila subsp. hydrophila (strain ATCC 7966 / DSM 30187 / BCRC 13018 / CCUG 14551 / JCM 1027 / KCTC 2358 / NCIMB 9240 / NCTC 8049)).